The following is a 216-amino-acid chain: Thymidine kinase (216 aa).

ATP is bound by residues 9–16 (GTMDCGKS) and 86–89 (DEAQ). Catalysis depends on Glu-87, which acts as the Proton acceptor.

This sequence belongs to the thymidine kinase family. As to quaternary structure, homotetramer.

Its subcellular location is the cytoplasm. The catalysed reaction is thymidine + ATP = dTMP + ADP + H(+). In Streptomyces avermitilis (strain ATCC 31267 / DSM 46492 / JCM 5070 / NBRC 14893 / NCIMB 12804 / NRRL 8165 / MA-4680), this protein is Thymidine kinase.